The following is a 436-amino-acid chain: Probable protein phosphatase 2C 15 (436 aa).

Positions 30 to 302 (KAAKMEKPIV…DDTTCIVVDI (273 aa)) constitute a PPM-type phosphatase domain. The Mn(2+) site is built by aspartate 78, glycine 79, aspartate 254, and aspartate 293.

It belongs to the PP2C family. The cofactor is Mg(2+). Mn(2+) is required as a cofactor.

The enzyme catalyses O-phospho-L-seryl-[protein] + H2O = L-seryl-[protein] + phosphate. It catalyses the reaction O-phospho-L-threonyl-[protein] + H2O = L-threonyl-[protein] + phosphate. This chain is Probable protein phosphatase 2C 15, found in Arabidopsis thaliana (Mouse-ear cress).